The sequence spans 461 residues: Ornithine decarboxylase (461 aa).

An N6-(pyridoxal phosphate)lysine modification is found at Lys-69. Pyridoxal 5'-phosphate-binding positions include Ser-200, Gly-237, and 274 to 277 (EPGR). Ser-303 is modified (phosphoserine; by CK2). 331–332 (YD) provides a ligand contact to substrate. Residue Cys-360 is the Proton donor; shared with dimeric partner of the active site. Cys-360 is subject to S-nitrosocysteine. Asp-361 contacts substrate. Tyr-389 serves as a coordination point for pyridoxal 5'-phosphate.

This sequence belongs to the Orn/Lys/Arg decarboxylase class-II family. Homodimer. Only the dimer is catalytically active, as the active sites are constructed of residues from both monomers. Requires pyridoxal 5'-phosphate as cofactor.

It carries out the reaction L-ornithine + H(+) = putrescine + CO2. Its pathway is amine and polyamine biosynthesis; putrescine biosynthesis via L-ornithine pathway; putrescine from L-ornithine: step 1/1. Inhibited by antizymes (AZs) OAZ1, OAZ2 and OAZ3 in response to polyamine levels. AZs inhibit the assembly of the functional homodimer by binding to ODC monomers. Additionally, OAZ1 targets ODC monomers for ubiquitin-independent proteolytic destruction by the 26S proteasome. In terms of biological role, catalyzes the first and rate-limiting step of polyamine biosynthesis that converts ornithine into putrescine, which is the precursor for the polyamines, spermidine and spermine. Polyamines are essential for cell proliferation and are implicated in cellular processes, ranging from DNA replication to apoptosis. The protein is Ornithine decarboxylase (Odc1) of Rattus norvegicus (Rat).